We begin with the raw amino-acid sequence, 33 residues long: Natriuretic peptide NP2 (33 aa).

Cys10 and Cys26 are disulfide-bonded.

As to expression, expressed by the venom gland.

The protein resides in the secreted. Snake venom natriuretic peptide that shows an increase in perfusion pressure, urinary flow and glomerular filtration rate. Reduces total and proximal tubular transport of sodium. In the aortic ring assay, causes a relaxant effect in endothelium-intact thoracic aortic rings precontracted with phenylephrine in the presence and absence of isatin, a natriuretic receptor antagonist. The chain is Natriuretic peptide NP2 from Crotalus durissus cascavella (Northeastern Brazilian rattlesnake).